The following is an 886-amino-acid chain: Adhesion G protein-coupled receptor E1 (886 aa).

Positions 1 to 20 (MRGFNLLLFWGCCVMHSWEG) are cleaved as a signal peptide. Residues 21-599 (HIRPTRKPNT…IMASGELTMD (579 aa)) lie on the Extracellular side of the membrane. The EGF-like 1 domain occupies 31 to 79 (KGNNCRDSTLCPAYATCTNTVDSYYCACKQGFLSSNGQNHFKDPGVRCK). Intrachain disulfides connect C35-C47, C41-C56, C58-C78, C84-C97, C91-C106, C108-C130, C136-C148, C142-C157, C159-C170, C176-C188, C182-C197, C199-C219, C225-C235, C229-C244, C246-C266, C272-C285, C279-C294, and C296-C315. Residues 80–131 (DIDECSQSPQPCGPNSSCKNLSGRYKCSCLDGFSSPTGNDWVPGKPGNFSCT) enclose the EGF-like 2; calcium-binding domain. N-linked (GlcNAc...) asparagine glycosylation is found at N94, N99, and N127. One can recognise an EGF-like 3; calcium-binding domain in the interval 132–171 (DINECLTSSVCPEHSDCVNSMGSYSCSCQVGFISRNSTCE). N-linked (GlcNAc...) asparagine glycosylation occurs at N167. The EGF-like 4; calcium-binding domain maps to 172-220 (DVDECADPRACPEHATCNNTVGNYSCFCNPGFESSSGHLSFQGLKASCE). N-linked (GlcNAc...) asparagine glycosylation is found at N189 and N194. The EGF-like 5; calcium-binding domain maps to 221–267 (DIDECTEMCPINSTCTNTPGSYFCTCHPGFAPSNGQLNFTDQGVECR). N-linked (GlcNAc...) asparagine glycosylation is found at N232 and N258. In terms of domain architecture, EGF-like 6; calcium-binding spans 268-316 (DIDECRQDPSTCGPNSICTNALGSYSCGCIAGFHPNPEGSQKDGNFSCQ). Residues N312, N366, N375, and N448 are each glycosylated (N-linked (GlcNAc...) asparagine). The GAIN-B domain occupies 431–597 (EYLDIESKVI…AVIMASGELT (167 aa)). Disulfide bonds link C550-C579 and C567-C581. The GPS stretch occupies residues 550–597 (CVSWSTDVKGGRWTSFGCVILEASETYTICSCNQMANLAVIMASGELT). The helical transmembrane segment at 600–627 (FSLYIISHVGIIISLVCLVLAIATFLLC) threads the bilayer. Over 628 to 634 (RSIRNHN) the chain is Cytoplasmic. Residues 635–656 (TYLHLHLCVCLLLAKTLFLAGI) traverse the membrane as a helical segment. At 657–666 (HKTDNKMGCA) the chain is on the extracellular side. The chain crosses the membrane as a helical span at residues 667–690 (IIAGFLHYLFLACFFWMLVEAVIL). Residues 691–709 (FLMVRNLKVVNYFSSRNIK) lie on the Cytoplasmic side of the membrane. Residues 710-731 (MLHICAFGYGLPMLVVVISASV) traverse the membrane as a helical segment. Residues 732–747 (QPQGYGMHNRCWLNTE) lie on the Extracellular side of the membrane. A helical transmembrane segment spans residues 748 to 776 (TGFIWSFLGPVCTVIVINSLLLTWTLWIL). Residues 777 to 794 (RQRLSSVNAEVSTLKDTR) lie on the Cytoplasmic side of the membrane. The chain crosses the membrane as a helical span at residues 795-814 (LLTFKAFAQLFILGCSWVLG). Topologically, residues 815–829 (IFQIGPVAGVMAYLF) are extracellular. The helical transmembrane segment at 830–852 (TIINSLQGAFIFLIHCLLNGQVR) threads the bilayer. The Cytoplasmic segment spans residues 853-886 (EEYKRWITGKTKPSSQSQTSRILLSSMPSASKTG). Positions 862 to 886 (KTKPSSQSQTSRILLSSMPSASKTG) are disordered. Residues 863–886 (TKPSSQSQTSRILLSSMPSASKTG) show a composition bias toward polar residues.

The protein belongs to the G-protein coupled receptor 2 family. Adhesion G-protein coupled receptor (ADGR) subfamily. As to expression, expression is restricted to eosinophils.

Its subcellular location is the cell membrane. Functionally, orphan receptor involved in cell adhesion and probably in cell-cell interactions specifically involving cells of the immune system. May play a role in regulatory T-cells (Treg) development. This is Adhesion G protein-coupled receptor E1 from Homo sapiens (Human).